The chain runs to 284 residues: Pseudomurein endoisopeptidase PeiW (284 aa).

4 pseudomurein-binding repeat regions span residues 4–31 (GLNEFLDMKKRYEDFKMKNKREPRYVTT), 34–65 (GYKVMLPVFKDMLRRYEDFVRINGREPNYISI), 70–100 (NGKIEIKKFRDMLRRYEDFVRINGREPNIIY), and 106–137 (SDHVSLGTFKDMLRRYKDFVRINGREPNYISI). Catalysis depends on residues C198, H233, and D250.

Belongs to the Psimunavirus Pseudomurein endoisopeptidase family. In terms of assembly, monomer. The cofactor is Ca(2+). Mg(2+) is required as a cofactor.

In terms of biological role, cysteine protease that cleaves the cell wall of its host methanogen under hydrogen limitation of the latter (autolysis). Cleaves the epsilon-Ala-Lys isopeptide bond in the oligopeptides of pseudomurein. The protein is Pseudomurein endoisopeptidase PeiW (peiW) of Methanothermobacter phage psiM100.